Reading from the N-terminus, the 499-residue chain is Fumarate hydratase 2 (499 aa).

The segment at 19 to 51 is disordered; it reads ADVTLKQEDEQQERRSYSTPFREERDTFGPIQV. The segment covering 23-45 has biased composition (basic and acidic residues); sequence LKQEDEQQERRSYSTPFREERDT. Substrate contacts are provided by residues 134 to 136, 164 to 167, 174 to 176, and threonine 222; these read SGT, HPND, and SSN. Catalysis depends on histidine 223, which acts as the Proton donor/acceptor. Serine 353 is an active-site residue. Substrate contacts are provided by residues serine 354 and 359-361; that span reads KVN.

The protein belongs to the class-II fumarase/aspartase family. Fumarase subfamily. Homotetramer.

The protein resides in the cytoplasm. Its subcellular location is the cytosol. It carries out the reaction (S)-malate = fumarate + H2O. With respect to regulation, fumarate hydratase activity (fumarate to L-malate) is strongly inhibited by phosphoenolpyruvate, citrate, oxaloacetate, ATP and ADP. Malate dehydratase activity (malate to fumarate) is activated by oxaloacetate, Asn and Gln. Malate dehydratase activity (malate to fumarate) is inhibited by citrate, succinate, ADP and ATP. Its function is as follows. Cytosolic fumarate hydratase that catalyzes the reversible stereospecific interconversion of fumarate to L-malate. Catalyzes the dehydration of L-malate to fumarate in the cytosol: required for the massive fumarate accumulation during the day in plants grown under high nitrogen. Also required for acclimation of photosynthesis to cold: acts by mediating accumulation of fumarate at low temperature, leading to reduce accumulation of phosphorylated sugars. This is Fumarate hydratase 2 from Arabidopsis thaliana (Mouse-ear cress).